The following is an 88-amino-acid chain: Small ribosomal subunit protein uS17 (88 aa).

This sequence belongs to the universal ribosomal protein uS17 family. In terms of assembly, part of the 30S ribosomal subunit.

One of the primary rRNA binding proteins, it binds specifically to the 5'-end of 16S ribosomal RNA. This chain is Small ribosomal subunit protein uS17, found in Stutzerimonas stutzeri (strain A1501) (Pseudomonas stutzeri).